A 352-amino-acid chain; its full sequence is UDP-N-acetylglucosamine--N-acetylmuramyl-(pentapeptide) pyrophosphoryl-undecaprenol N-acetylglucosamine transferase (352 aa).

S195 and Q287 together coordinate UDP-N-acetyl-alpha-D-glucosamine.

This sequence belongs to the glycosyltransferase 28 family. MurG subfamily.

The protein resides in the cell membrane. The catalysed reaction is Mur2Ac(oyl-L-Ala-gamma-D-Glu-L-Lys-D-Ala-D-Ala)-di-trans,octa-cis-undecaprenyl diphosphate + UDP-N-acetyl-alpha-D-glucosamine = beta-D-GlcNAc-(1-&gt;4)-Mur2Ac(oyl-L-Ala-gamma-D-Glu-L-Lys-D-Ala-D-Ala)-di-trans,octa-cis-undecaprenyl diphosphate + UDP + H(+). It participates in cell wall biogenesis; peptidoglycan biosynthesis. Its function is as follows. Cell wall formation. Catalyzes the transfer of a GlcNAc subunit on undecaprenyl-pyrophosphoryl-MurNAc-pentapeptide (lipid intermediate I) to form undecaprenyl-pyrophosphoryl-MurNAc-(pentapeptide)GlcNAc (lipid intermediate II). This is UDP-N-acetylglucosamine--N-acetylmuramyl-(pentapeptide) pyrophosphoryl-undecaprenol N-acetylglucosamine transferase from Streptococcus pneumoniae (strain Hungary19A-6).